A 329-amino-acid polypeptide reads, in one-letter code: 4-hydroxy-3-methylbut-2-enyl diphosphate reductase 1 (329 aa).

C29 is a binding site for [4Fe-4S] cluster. (2E)-4-hydroxy-3-methylbut-2-enyl diphosphate contacts are provided by H58 and H95. The dimethylallyl diphosphate site is built by H58 and H95. Isopentenyl diphosphate is bound by residues H58 and H95. C117 is a binding site for [4Fe-4S] cluster. H145 provides a ligand contact to (2E)-4-hydroxy-3-methylbut-2-enyl diphosphate. Position 145 (H145) interacts with dimethylallyl diphosphate. H145 lines the isopentenyl diphosphate pocket. E147 functions as the Proton donor in the catalytic mechanism. Residue T185 participates in (2E)-4-hydroxy-3-methylbut-2-enyl diphosphate binding. Residue C215 participates in [4Fe-4S] cluster binding. Residues S243, S244, N245, and S287 each coordinate (2E)-4-hydroxy-3-methylbut-2-enyl diphosphate. Positions 243, 244, 245, and 287 each coordinate dimethylallyl diphosphate. Isopentenyl diphosphate contacts are provided by S243, S244, N245, and S287.

Belongs to the IspH family. [4Fe-4S] cluster is required as a cofactor.

It carries out the reaction isopentenyl diphosphate + 2 oxidized [2Fe-2S]-[ferredoxin] + H2O = (2E)-4-hydroxy-3-methylbut-2-enyl diphosphate + 2 reduced [2Fe-2S]-[ferredoxin] + 2 H(+). The enzyme catalyses dimethylallyl diphosphate + 2 oxidized [2Fe-2S]-[ferredoxin] + H2O = (2E)-4-hydroxy-3-methylbut-2-enyl diphosphate + 2 reduced [2Fe-2S]-[ferredoxin] + 2 H(+). Its pathway is isoprenoid biosynthesis; dimethylallyl diphosphate biosynthesis; dimethylallyl diphosphate from (2E)-4-hydroxy-3-methylbutenyl diphosphate: step 1/1. The protein operates within isoprenoid biosynthesis; isopentenyl diphosphate biosynthesis via DXP pathway; isopentenyl diphosphate from 1-deoxy-D-xylulose 5-phosphate: step 6/6. Catalyzes the conversion of 1-hydroxy-2-methyl-2-(E)-butenyl 4-diphosphate (HMBPP) into a mixture of isopentenyl diphosphate (IPP) and dimethylallyl diphosphate (DMAPP). Acts in the terminal step of the DOXP/MEP pathway for isoprenoid precursor biosynthesis. This is 4-hydroxy-3-methylbut-2-enyl diphosphate reductase 1 from Mycobacterium tuberculosis (strain CDC 1551 / Oshkosh).